A 367-amino-acid chain; its full sequence is B2 bradykinin receptor (367 aa).

At 1-36 the chain is on the extracellular side; sequence MLNLTSQVPEPALNGTLPQSSSCFHSDWWNWLNTIQ. N-linked (GlcNAc...) asparagine glycans are attached at residues asparagine 3 and asparagine 14. Residues 37-60 traverse the membrane as a helical segment; the sequence is APFLWVLFLLAALENIFVLSVFCL. At 61–69 the chain is on the cytoplasmic side; it reads HKNSCTVAE. A helical transmembrane segment spans residues 70–94; sequence IYLGNLAMADLILALGLPFWAITIA. Residues 95-107 are Extracellular-facing; sequence NHFDWLFGEVLCR. Cysteine 106 and cysteine 187 are oxidised to a cystine. The chain crosses the membrane as a helical span at residues 108 to 129; the sequence is VVNTMIYMNLYSSICFLMLVSI. At 130-151 the chain is on the cytoplasmic side; the sequence is DRYLALVKTMSMGRMRGVRWAK. Tyrosine 132 is modified (phosphotyrosine). Residues 152 to 174 form a helical membrane-spanning segment; sequence LYSLVIWGCTLLLSSPMLAFRTM. Over 175–197 the chain is Extracellular; it reads HEYAAEGHNVTACIIKYPSRSWM. Asparagine 183 carries an N-linked (GlcNAc...) asparagine glycan. Residues 198 to 224 form a helical membrane-spanning segment; that stretch reads VFTNILLNSVGFLLPLSIITYCTVQIL. The Cytoplasmic portion of the chain corresponds to 225–243; it reads QVLRNNEMQKFKEIQTERK. The helical transmembrane segment at 244–268 threads the bilayer; sequence ATVLVLAVLLLFVVCWLPFQISTFL. Over 269–287 the chain is Extracellular; sequence DTLLRLGVLSGCWDEHAVD. A helical membrane pass occupies residues 288-311; the sequence is VITQISSYVAYSNSGLNPLVYVIV. Residues 312–367 lie on the Cytoplasmic side of the membrane; it reads GKRFRKKSREVYRVLCQKGGCMGEPVQMENSMGTLRTSISVERQIHKLQDWAGKKQ. Tyrosine 323 carries the phosphotyrosine modification. Cysteine 327 is lipidated: S-palmitoyl cysteine. Serine 342 carries the post-translational modification Phosphoserine. Threonine 345 carries the post-translational modification Phosphothreonine. 2 positions are modified to phosphoserine; by GRK6: serine 349 and serine 351.

Belongs to the G-protein coupled receptor 1 family. Bradykinin receptor subfamily. BDKRB2 sub-subfamily. As to quaternary structure, forms a complex with PECAM1 and GNAQ. Interacts with PECAM1.

Its subcellular location is the cell membrane. In terms of biological role, receptor for bradykinin. It is associated with G proteins that activate a phosphatidylinositol-calcium second messenger system. The chain is B2 bradykinin receptor (BDKRB2) from Sus scrofa (Pig).